The sequence spans 306 residues: Protein translocase subunit SecF (306 aa).

6 consecutive transmembrane segments (helical) span residues 17–37 (AFAVTLILTVIALGSWFTKGI), 134–154 (GLGMLLALGGILLYVGFRFQW), 158–178 (LGAILSLVHDAIIVMGVLSFF), 185–205 (TVLAAVLAVVGYSLNDTIVIF), 232–254 (LLRTIATSVSTLLAIAALLFFGG), and 268–288 (VMAGTYSSIYIANVVLIWLNL).

Belongs to the SecD/SecF family. SecF subfamily. In terms of assembly, forms a complex with SecD. Part of the essential Sec protein translocation apparatus which comprises SecA, SecYEG and auxiliary proteins SecDF-YajC and YidC.

The protein resides in the cell inner membrane. In terms of biological role, part of the Sec protein translocase complex. Interacts with the SecYEG preprotein conducting channel. SecDF uses the proton motive force (PMF) to complete protein translocation after the ATP-dependent function of SecA. This Pseudomonas aeruginosa (strain ATCC 15692 / DSM 22644 / CIP 104116 / JCM 14847 / LMG 12228 / 1C / PRS 101 / PAO1) protein is Protein translocase subunit SecF.